Consider the following 503-residue polypeptide: MDLIPDLAVETWLLLAVTLVLLYLYGTHSHGLFKKLGIPGPTPLPLLGNILSYRKGFWTFDMECYKKYGKVWGFYDGRQPVLAITDPNMIKTVLVKECYSVFTNRRPFGPVGFMKNAISIAEDEEWKRIRSLLSPTFTSGKLKEMVPIIAKYGDVLVRNLRREAETGKPVTLKDVFGAYSMDVITSTSFGVNIDSLNNPQDPFVENTKKLLRFDFLDPFFLSITIFPFIIPILEVLNISIFPREVTSFLRKSVKRIKESRLKDTQKHRVDFLQLMIDSQNSKETESHKALSDLELVAQSIIFIFAGYETTSSVLSFIIYELATHPDVQQKLQEEIDTVLPNKAPPTYDTVLQMEYLDMVVNETLRIFPIAMRLERVCKKDVEINGIFIPKGVVVMIPSYALHHDPKYWPEPEKFLPERFSKKNNDNIDPYIYTPFGSGPRNCIGMRFALMNMKLAIIRVLQNFSFKPCKETQIPLKLRLGGLLQTEKPIVLKIESRDGTVSGA.

Residue cysteine 442 participates in heme binding.

The protein belongs to the cytochrome P450 family. Requires heme as cofactor.

It is found in the endoplasmic reticulum membrane. The protein resides in the microsome membrane. The enzyme catalyses an organic molecule + reduced [NADPH--hemoprotein reductase] + O2 = an alcohol + oxidized [NADPH--hemoprotein reductase] + H2O + H(+). Functionally, catalyzes nifedipine and nilvadipine oxidations. The chain is Cytochrome P450 3A8 (CYP3A8) from Macaca fascicularis (Crab-eating macaque).